A 103-amino-acid chain; its full sequence is Large ribosomal subunit protein uL22c (103 aa).

It belongs to the universal ribosomal protein uL22 family. In terms of assembly, part of the 50S ribosomal subunit.

The protein resides in the plastid. It is found in the chloroplast. Its function is as follows. This protein binds specifically to 23S rRNA. Functionally, the globular domain of the protein is located near the polypeptide exit tunnel on the outside of the subunit, while an extended beta-hairpin is found that lines the wall of the exit tunnel in the center of the 70S ribosome. The chain is Large ribosomal subunit protein uL22c (rpl22) from Cyanidium caldarium (Red alga).